Reading from the N-terminus, the 348-residue chain is L-threonine 3-dehydrogenase (348 aa).

C42 lines the Zn(2+) pocket. Residues T44 and H47 each act as charge relay system in the active site. Zn(2+) is bound by residues H67, E68, C97, C100, C103, and C111. NAD(+) is bound by residues L179, E199, R204, L266–L268, and I291–T292.

This sequence belongs to the zinc-containing alcohol dehydrogenase family. In terms of assembly, homotetramer. Requires Zn(2+) as cofactor.

It is found in the cytoplasm. It catalyses the reaction L-threonine + NAD(+) = (2S)-2-amino-3-oxobutanoate + NADH + H(+). It functions in the pathway amino-acid degradation; L-threonine degradation via oxydo-reductase pathway; glycine from L-threonine: step 1/2. Functionally, catalyzes the NAD(+)-dependent oxidation of L-threonine to 2-amino-3-ketobutyrate. The chain is L-threonine 3-dehydrogenase from Pyrococcus abyssi (strain GE5 / Orsay).